A 613-amino-acid chain; its full sequence is Dihydroxy-acid dehydratase (613 aa).

Aspartate 81 provides a ligand contact to Mg(2+). Cysteine 122 serves as a coordination point for [2Fe-2S] cluster. Mg(2+)-binding residues include aspartate 123 and lysine 124. At lysine 124 the chain carries N6-carboxylysine. Cysteine 193 contacts [2Fe-2S] cluster. Glutamate 489 is a Mg(2+) binding site. Serine 515 acts as the Proton acceptor in catalysis.

Belongs to the IlvD/Edd family. In terms of assembly, homodimer. [2Fe-2S] cluster serves as cofactor. Mg(2+) is required as a cofactor.

The enzyme catalyses (2R)-2,3-dihydroxy-3-methylbutanoate = 3-methyl-2-oxobutanoate + H2O. It catalyses the reaction (2R,3R)-2,3-dihydroxy-3-methylpentanoate = (S)-3-methyl-2-oxopentanoate + H2O. It functions in the pathway amino-acid biosynthesis; L-isoleucine biosynthesis; L-isoleucine from 2-oxobutanoate: step 3/4. Its pathway is amino-acid biosynthesis; L-valine biosynthesis; L-valine from pyruvate: step 3/4. In terms of biological role, functions in the biosynthesis of branched-chain amino acids. Catalyzes the dehydration of (2R,3R)-2,3-dihydroxy-3-methylpentanoate (2,3-dihydroxy-3-methylvalerate) into 2-oxo-3-methylpentanoate (2-oxo-3-methylvalerate) and of (2R)-2,3-dihydroxy-3-methylbutanoate (2,3-dihydroxyisovalerate) into 2-oxo-3-methylbutanoate (2-oxoisovalerate), the penultimate precursor to L-isoleucine and L-valine, respectively. The polypeptide is Dihydroxy-acid dehydratase (Pseudomonas fluorescens (strain Pf0-1)).